The sequence spans 231 residues: MNNIQKGIKEDFGIEFANQDLLLEAFTQGNYLNEHPEEKGRDYQRLEFLGDSVMQLIVADYLFTRYPAWEEGQLTEMRIAMVQSKSFSHFARLAGFNRYIRLGKGEELSGARNRDSLLEDIWEAFIGALYKDQGAKAVFTFLNKAFFPAIDEGFFEEFIDYKSKLQELLQKAGSVDIEYKVENEDLSDPQKPHFEVTVFVNDKAIGSGSGRSIKIAEKRAAKKAYQDVTPR.

One can recognise an RNase III domain in the interval 5 to 134 (QKGIKEDFGI…FIGALYKDQG (130 aa)). A Mg(2+)-binding site is contributed by Glu-47. Asp-51 is a catalytic residue. Positions 120 and 123 each coordinate Mg(2+). The active site involves Glu-123. The region spanning 160-230 (DYKSKLQELL…AKKAYQDVTP (71 aa)) is the DRBM domain.

It belongs to the ribonuclease III family. Homodimer. It depends on Mg(2+) as a cofactor.

The protein localises to the cytoplasm. The enzyme catalyses Endonucleolytic cleavage to 5'-phosphomonoester.. Its function is as follows. Digests double-stranded RNA. Involved in the processing of primary rRNA transcript to yield the immediate precursors to the large and small rRNAs (23S and 16S). Processes some mRNAs, and tRNAs when they are encoded in the rRNA operon. Processes pre-crRNA and tracrRNA of type II CRISPR loci if present in the organism. This chain is Ribonuclease 3, found in Oenococcus oeni (strain ATCC BAA-331 / PSU-1).